The following is a 125-amino-acid chain: Holo-[acyl-carrier-protein] synthase (125 aa).

2 residues coordinate Mg(2+): Asp-8 and Glu-56.

Belongs to the P-Pant transferase superfamily. AcpS family. The cofactor is Mg(2+).

The protein localises to the cytoplasm. It carries out the reaction apo-[ACP] + CoA = holo-[ACP] + adenosine 3',5'-bisphosphate + H(+). Functionally, transfers the 4'-phosphopantetheine moiety from coenzyme A to a Ser of acyl-carrier-protein. The chain is Holo-[acyl-carrier-protein] synthase from Borrelia turicatae (strain 91E135).